A 442-amino-acid chain; its full sequence is Ribulose bisphosphate carboxylase/oxygenase activase 1, chloroplastic (442 aa).

The N-terminal 58 residues, methionine 1–valine 58, are a transit peptide targeting the chloroplast. Glycine 169–serine 176 is an ATP binding site.

This sequence belongs to the RuBisCO activase family.

The protein localises to the plastid. Its subcellular location is the chloroplast stroma. Activation of RuBisCO (ribulose-1,5-bisphosphate carboxylase/oxygenase; EC 4.1.1.39) involves the ATP-dependent carboxylation of the epsilon-amino group of lysine leading to a carbamate structure. This chain is Ribulose bisphosphate carboxylase/oxygenase activase 1, chloroplastic, found in Nicotiana tabacum (Common tobacco).